Here is a 161-residue protein sequence, read N- to C-terminus: Nucleotide-binding protein Ajs_2750 (161 aa).

It belongs to the YajQ family.

Its function is as follows. Nucleotide-binding protein. The protein is Nucleotide-binding protein Ajs_2750 of Acidovorax sp. (strain JS42).